Consider the following 560-residue polypeptide: E3 SUMO-protein ligase CBX4 (560 aa).

Positions 1 to 75 (MELPAVGEHV…LMGYRKRGPK (75 aa)) are involved in interaction with H3C15 and H3C1. Positions 1-539 (MELPAVGEHV…LSEFKPFFGN (539 aa)) are interaction with BMI1. Residues 11–69 (FAVESIEKKRIRKGRVEYLVKWRGWSPKYNTWEPEENILDPRLLIAFQNRERQEQLMGY) enclose the Chromo domain. Residues K77, K106, K114, and K125 each participate in a glycyl lysine isopeptide (Lys-Gly) (interchain with G-Cter in SUMO2) cross-link. A disordered region spans residues 92 to 152 (VLTGLQDSST…PPGKSGKYYY (61 aa)). Position 149 is an N6-acetyllysine; alternate (K149). K149 is covalently cross-linked (Glycyl lysine isopeptide (Lys-Gly) (interchain with G-Cter in SUMO2); alternate). Glycyl lysine isopeptide (Lys-Gly) (interchain with G-Cter in SUMO2) cross-links involve residues K157, K167, and K178. S182 is modified (phosphoserine). Residues K191, K205, K212, K223, K249, K268, K278, and K280 each participate in a glycyl lysine isopeptide (Lys-Gly) (interchain with G-Cter in SUMO2) cross-link. The interval 217-243 (AAGAPGKGSEKGPPNGMMPAPKEAVTG) is disordered. Composition is skewed to basic and acidic residues over residues 281-291 (SGEVAEGEARS) and 298-331 (AADE…REEE). Residues 281 to 404 (SGEVAEGEAR…HHHHHHAVGL (124 aa)) are disordered. Glycyl lysine isopeptide (Lys-Gly) (interchain with G-Cter in SUMO2) cross-links involve residues K320, K352, and K365. The segment covering 380-401 (PSHHPHPHPHHHHHHHHHHHHA) has biased composition (basic residues). Phosphoserine is present on S467. A Glycyl lysine isopeptide (Lys-Gly) (interchain with G-Cter in SUMO2); alternate cross-link involves residue K494. A Glycyl lysine isopeptide (Lys-Gly) (interchain with G-Cter in SUMO); alternate cross-link involves residue K494. A Phosphothreonine; by HIPK2 modification is found at T497. Over residues 509–521 (AAPTTTAEKPPAE) the composition is skewed to low complexity. A disordered region spans residues 509 to 528 (AAPTTTAEKPPAEAQDEPAE). An involved in interaction with H3C15 and RNF2 region spans residues 531-556 (SEFKPFFGNIIITDVTANCLTVTFKE). The interaction with RNF2 stretch occupies residues 540-560 (IIITDVTANCLTVTFKEYVTV).

As to quaternary structure, interacts with histone H3-K9Me3. Interacts with CHTOP. Component of a PRC1-like complex. The composition of the PRC1 complex differs between the PRC1 complex in pluripotent embryonic stem cells containing RNF2, CBX7 and PCGF2, and the PRC1 complex in differentiating cells containing RNF2, CBX2, CBX4 and BMI1. Self-associates. Interacts with SUV39H1 and HIPK2. Interacts with CSNK2B. May interact with H3C15, H3C1 and RNF2. Interacts with SUMO1P1/SUMO5. Interacts with PRDM1/Blimp-1. Post-translationally, ubiquitinated. Ubiquitination regulates the function of the Polycomb group (PcG) multiprotein PRC1-like complex. Deubiquitinated by USP26. Phosphorylated on Thr-497 by HIPK2 upon DNA damage. This phosphorylation stimulates E3 SUMO-protein ligase activity and promotes sumoylation on Lys-494, as well as sumoylation of other target proteins, such as HNRNPK. As to expression, ubiquitous.

It localises to the nucleus. The protein resides in the nucleus speckle. It functions in the pathway protein modification; protein sumoylation. Its function is as follows. E3 SUMO-protein ligase that catalyzes sumoylation of target proteins by promoting the transfer of SUMO from the E2 enzyme to the substrate. Involved in the sumoylation of HNRNPK, a p53/TP53 transcriptional coactivator, hence indirectly regulates p53/TP53 transcriptional activation resulting in p21/CDKN1A expression. Monosumoylates ZNF131. Functionally, component of a Polycomb group (PcG) multiprotein PRC1-like complex, a complex class required to maintain the transcriptionally repressive state of many genes, including Hox genes, throughout development. PcG PRC1 complex acts via chromatin remodeling and modification of histones; it mediates monoubiquitination of histone H2A 'Lys-119', rendering chromatin heritably changed in its expressibility. Binds to histone H3 trimethylated at 'Lys-9' (H3K9me3). Plays a role in the lineage differentiation of the germ layers in embryonic development. The chain is E3 SUMO-protein ligase CBX4 (CBX4) from Homo sapiens (Human).